The chain runs to 324 residues: Olfactory receptor 52N5 (324 aa).

The Extracellular portion of the chain corresponds to 1–33 (MPLFNSLCWFPTIHVTPPSFILNGIPGLERVHV). The chain crosses the membrane as a helical span at residues 34–54 (WISLPLCTMYIIFLVGNLGLV). At 55-62 (YLIYYEES) the chain is on the cytoplasmic side. A helical transmembrane segment spans residues 63-84 (LHHPMYFFFGHALSLIDLLTCT). Residues 85-108 (TTLPNALCIFWFSLKEINFNACLA) are Extracellular-facing. C106 and C198 are oxidised to a cystine. A helical membrane pass occupies residues 109-129 (QMFFVHGFTGVESGVLMLMAL). Residues 130-148 (DRYVAICYPLRYATTLTNP) lie on the Cytoplasmic side of the membrane. The helical transmembrane segment at 149-169 (IIAKAELATFLRGVLLMIPFP) threads the bilayer. At 170–205 (FLVKRLPFCQSNIISHTYCDHMSVVKLSCASIKVNV) the chain is on the extracellular side. Residues 206-226 (IYGLMVALLIGVFDICCISLS) traverse the membrane as a helical segment. The Cytoplasmic portion of the chain corresponds to 227 to 246 (YTLILKAAISLSSSDARQKA). Residues 247–267 (FSTCTAHISAIIITYVPAFFT) traverse the membrane as a helical segment. At 268–283 (FFAHRFGGHTIPPSLH) the chain is on the extracellular side. The chain crosses the membrane as a helical span at residues 284 to 304 (IIVANLYLLLPPTLNPIVYGV). Over 305–324 (KTKQIRKSVIKFFQGDKGAG) the chain is Cytoplasmic.

It belongs to the G-protein coupled receptor 1 family.

It is found in the cell membrane. Functionally, odorant receptor. The polypeptide is Olfactory receptor 52N5 (OR52N5) (Homo sapiens (Human)).